A 161-amino-acid chain; its full sequence is DNA-directed RNA polymerase 19 kDa subunit (161 aa).

The span at 1-32 shows a compositional bias: acidic residues; that stretch reads MADTDDIIDYESDDLTEYEDDEEDGESLETSD. The interval 1 to 35 is disordered; sequence MADTDDIIDYESDDLTEYEDDEEDGESLETSDIDP.

It belongs to the poxviridae DNA-directed RNA polymerase 19 kDa subunit family. The DNA-dependent RNA polymerase used for intermediate and late genes expression consists of eight subunits Rpo30/OPG66, Rpo7/OPG90, Rpo22/OPG103, Rpo147/OPG105, Rpo18/OPG119, Rpo19/OPG131, Rpo132/OPG151 and Rpo35/OPG156. The same holoenzyme, with the addition of the transcription-specificity factor OPG109, is used for early gene expression.

Its subcellular location is the virion. It carries out the reaction RNA(n) + a ribonucleoside 5'-triphosphate = RNA(n+1) + diphosphate. In terms of biological role, part of the DNA-dependent RNA polymerase which catalyzes the transcription of viral DNA into RNA using the four ribonucleoside triphosphates as substrates. Responsible for the transcription of early, intermediate and late genes. DNA-dependent RNA polymerase associates with the early transcription factor (ETF), itself composed of OPG118 and OPG133, thereby allowing the early genes transcription. Late transcription, and probably also intermediate transcription, require newly synthesized RNA polymerase. The chain is DNA-directed RNA polymerase 19 kDa subunit (OPG131) from Monkeypox virus.